A 145-amino-acid polypeptide reads, in one-letter code: Flagellar assembly factor FliW (145 aa).

It belongs to the FliW family. As to quaternary structure, interacts with translational regulator CsrA and flagellin(s).

The protein resides in the cytoplasm. In terms of biological role, acts as an anti-CsrA protein, binds CsrA and prevents it from repressing translation of its target genes, one of which is flagellin. Binds to flagellin and participates in the assembly of the flagellum. The protein is Flagellar assembly factor FliW of Exiguobacterium sp. (strain ATCC BAA-1283 / AT1b).